Reading from the N-terminus, the 99-residue chain is UPF0213 protein YazA (99 aa).

Residues 4–79 (NNHFFYVVKC…KKLTRKKKEL (76 aa)) enclose the GIY-YIG domain.

Belongs to the UPF0213 family.

The polypeptide is UPF0213 protein YazA (yazA) (Bacillus subtilis (strain 168)).